The sequence spans 174 residues: Co-chaperone protein HscB homolog (174 aa).

A J domain is found at 2 to 74 (NYFELFKFSP…IRRAEHMLSL (73 aa)).

This sequence belongs to the HscB family. As to quaternary structure, interacts with HscA and stimulates its ATPase activity.

Its function is as follows. Co-chaperone involved in the maturation of iron-sulfur cluster-containing proteins. Seems to help targeting proteins to be folded toward HscA. The chain is Co-chaperone protein HscB homolog from Shewanella sp. (strain MR-4).